The following is a 253-amino-acid chain: 3-deoxy-manno-octulosonate cytidylyltransferase (253 aa).

Belongs to the KdsB family.

Its subcellular location is the cytoplasm. It catalyses the reaction 3-deoxy-alpha-D-manno-oct-2-ulosonate + CTP = CMP-3-deoxy-beta-D-manno-octulosonate + diphosphate. Its pathway is nucleotide-sugar biosynthesis; CMP-3-deoxy-D-manno-octulosonate biosynthesis; CMP-3-deoxy-D-manno-octulosonate from 3-deoxy-D-manno-octulosonate and CTP: step 1/1. It functions in the pathway bacterial outer membrane biogenesis; lipopolysaccharide biosynthesis. Activates KDO (a required 8-carbon sugar) for incorporation into bacterial lipopolysaccharide in Gram-negative bacteria. The sequence is that of 3-deoxy-manno-octulosonate cytidylyltransferase from Neisseria gonorrhoeae (strain ATCC 700825 / FA 1090).